Here is a 121-residue protein sequence, read N- to C-terminus: Large ribosomal subunit protein uL14 (121 aa).

Belongs to the universal ribosomal protein uL14 family. As to quaternary structure, part of the 50S ribosomal subunit. Forms a cluster with proteins L3 and L19. In the 70S ribosome, L14 and L19 interact and together make contacts with the 16S rRNA in bridges B5 and B8.

Binds to 23S rRNA. Forms part of two intersubunit bridges in the 70S ribosome. The chain is Large ribosomal subunit protein uL14 from Opitutus terrae (strain DSM 11246 / JCM 15787 / PB90-1).